A 222-amino-acid chain; its full sequence is Ribonuclease T (222 aa).

One can recognise an Exonuclease domain in the interval 20–194 (VVIDVETAGF…YDTERTAELF (175 aa)). Mg(2+) is bound by residues D23, E25, H181, and D186. The active-site Proton donor/acceptor is the H181.

Belongs to the RNase T family. In terms of assembly, homodimer. It depends on Mg(2+) as a cofactor.

In terms of biological role, trims short 3' overhangs of a variety of RNA species, leaving a one or two nucleotide 3' overhang. Responsible for the end-turnover of tRNA: specifically removes the terminal AMP residue from uncharged tRNA (tRNA-C-C-A). Also appears to be involved in tRNA biosynthesis. This is Ribonuclease T from Shewanella sp. (strain ANA-3).